We begin with the raw amino-acid sequence, 478 residues long: MVIPSLPLSRWLSPLRRYFRHELLPLLADLRLAIGLFLAIALLSAVGTVIEQEETVAFYQAHYPEHPALFGFLTWRLILKLGLDHVYRTSWFLALLILFGSSLAACSLTRQWPMLKVARRWSYLTRPHSFQRLPFWTYLPQRSLQGLPQRLRQRGYAVFQDGSRLYARKGLIGRFGPILVHVSLLLILLGAIWGSLAGFKAQALIPSGSVAAIEQVTGAGDLAHLPTWQIRVNRFWIDYAPDGRVKQFYSDLSILDGGQEVKRQTISVNHPLSYRGVTLYQADWSIDSIRIRLNNSPPFQIPVVPVPTQAGSKLWGAFVPTRPDLSEGLTLLLPDLQGTALLYDTQGQWIGSLRQGMSLALDEVAPQRFPNRLTLHLDEVIGATGLQIKSDPGIPLVYLGFGLLMLGVAMSYFSYSQVWALETEAGLYLGGKTNRALVSFEREFARLVEQQLLSSPPSPAKEPPPAARVGGTESLANG.

3 consecutive transmembrane segments (helical) span residues leucine 30 to isoleucine 50, threonine 89 to threonine 109, and phenylalanine 175 to serine 195. The disordered stretch occupies residues leucine 453–glycine 478. Pro residues predominate over residues proline 456–alanine 466.

Belongs to the Ccs1/CcsB family. May interact with CcsA.

It is found in the cellular thylakoid membrane. Functionally, required during biogenesis of c-type cytochromes (cytochrome c6 and cytochrome f) at the step of heme attachment. The protein is Cytochrome c biogenesis protein CcsB of Synechococcus sp. (strain JA-3-3Ab) (Cyanobacteria bacterium Yellowstone A-Prime).